The chain runs to 964 residues: Adhesion defective protein 3 (964 aa).

The tract at residues M1 to S32 is disordered. The span at A16 to S32 shows a compositional bias: low complexity. In terms of domain architecture, LisH spans P34 to I66. Over residues S69–P83 the composition is skewed to low complexity. Disordered stretches follow at residues S69–N125, P241–A273, V476–M523, Q572–D596, and A664–S914. 3 stretches are compositionally biased toward polar residues: residues L93–I103, A261–P270, and T508–M523. Low complexity predominate over residues S575–N589. 6 stretches are compositionally biased toward polar residues: residues A664 to N700, S707 to A716, R724 to E752, A767 to H801, T818 to S828, and G857 to Q868. Low complexity predominate over residues S869 to A885. The segment covering G894–N905 has biased composition (polar residues).

The protein belongs to the FLO8 family.

The protein resides in the cytoplasm. The protein localises to the nucleus. Probable transcriptional regulator involved in cell adhesion. The sequence is that of Adhesion defective protein 3 (adn3) from Schizosaccharomyces pombe (strain 972 / ATCC 24843) (Fission yeast).